The following is a 217-amino-acid chain: MITVALAKGALLNDSVARFQSAGLDFSAVLDPGNRQLMVPSHCGRARALLVRNGDVPVYVAYGQAQLGVVGYDVLREHQMPVAQLVDLGFGGCRMAVAVKASSGYQHAADLPPHCRVASKFTHCAREFFDALDLPVELVHLTGSVELGPLTGIAEAIVDLVATGRTLRDNGLVAIEELFQSSARLIGHPLALRLDRGDLQLIVEAMRIQESLPKNPA.

Belongs to the ATP phosphoribosyltransferase family. Short subfamily. Heteromultimer composed of HisG and HisZ subunits.

Its subcellular location is the cytoplasm. It catalyses the reaction 1-(5-phospho-beta-D-ribosyl)-ATP + diphosphate = 5-phospho-alpha-D-ribose 1-diphosphate + ATP. Its pathway is amino-acid biosynthesis; L-histidine biosynthesis; L-histidine from 5-phospho-alpha-D-ribose 1-diphosphate: step 1/9. Functionally, catalyzes the condensation of ATP and 5-phosphoribose 1-diphosphate to form N'-(5'-phosphoribosyl)-ATP (PR-ATP). Has a crucial role in the pathway because the rate of histidine biosynthesis seems to be controlled primarily by regulation of HisG enzymatic activity. The polypeptide is ATP phosphoribosyltransferase (Prochlorococcus marinus (strain MIT 9313)).